A 284-amino-acid polypeptide reads, in one-letter code: 4-diphosphocytidyl-2-C-methyl-D-erythritol kinase (284 aa).

The active site involves Lys14. 98-108 (PMGGGLGGGSS) contacts ATP. Residue Asp140 is part of the active site.

This sequence belongs to the GHMP kinase family. IspE subfamily.

It catalyses the reaction 4-CDP-2-C-methyl-D-erythritol + ATP = 4-CDP-2-C-methyl-D-erythritol 2-phosphate + ADP + H(+). Its pathway is isoprenoid biosynthesis; isopentenyl diphosphate biosynthesis via DXP pathway; isopentenyl diphosphate from 1-deoxy-D-xylulose 5-phosphate: step 3/6. Catalyzes the phosphorylation of the position 2 hydroxy group of 4-diphosphocytidyl-2C-methyl-D-erythritol. The protein is 4-diphosphocytidyl-2-C-methyl-D-erythritol kinase of Shewanella baltica (strain OS223).